A 77-amino-acid polypeptide reads, in one-letter code: Small ribosomal subunit protein bS16 (77 aa).

Belongs to the bacterial ribosomal protein bS16 family.

In Wolinella succinogenes (strain ATCC 29543 / DSM 1740 / CCUG 13145 / JCM 31913 / LMG 7466 / NCTC 11488 / FDC 602W) (Vibrio succinogenes), this protein is Small ribosomal subunit protein bS16.